We begin with the raw amino-acid sequence, 440 residues long: Xylose isomerase (440 aa).

Residues histidine 101 and aspartate 104 contribute to the active site. Mg(2+)-binding residues include glutamate 232, glutamate 268, histidine 271, aspartate 296, aspartate 307, aspartate 309, and aspartate 339.

This sequence belongs to the xylose isomerase family. Homotetramer. Requires Mg(2+) as cofactor.

The protein localises to the cytoplasm. It catalyses the reaction alpha-D-xylose = alpha-D-xylulofuranose. In Escherichia coli O17:K52:H18 (strain UMN026 / ExPEC), this protein is Xylose isomerase.